Reading from the N-terminus, the 410-residue chain is Arginine deiminase (410 aa).

Catalysis depends on Cys400, which acts as the Amidino-cysteine intermediate.

Belongs to the arginine deiminase family.

Its subcellular location is the cytoplasm. It catalyses the reaction L-arginine + H2O = L-citrulline + NH4(+). It functions in the pathway amino-acid degradation; L-arginine degradation via ADI pathway; carbamoyl phosphate from L-arginine: step 1/2. In Bacillus cytotoxicus (strain DSM 22905 / CIP 110041 / 391-98 / NVH 391-98), this protein is Arginine deiminase.